The sequence spans 157 residues: SsrA-binding protein (157 aa).

Positions 126–157 (GLGKGKQAHDKREAVKERDWQRDRARLMRDRG) are disordered. The span at 132-157 (QAHDKREAVKERDWQRDRARLMRDRG) shows a compositional bias: basic and acidic residues.

Belongs to the SmpB family.

It localises to the cytoplasm. Its function is as follows. Required for rescue of stalled ribosomes mediated by trans-translation. Binds to transfer-messenger RNA (tmRNA), required for stable association of tmRNA with ribosomes. tmRNA and SmpB together mimic tRNA shape, replacing the anticodon stem-loop with SmpB. tmRNA is encoded by the ssrA gene; the 2 termini fold to resemble tRNA(Ala) and it encodes a 'tag peptide', a short internal open reading frame. During trans-translation Ala-aminoacylated tmRNA acts like a tRNA, entering the A-site of stalled ribosomes, displacing the stalled mRNA. The ribosome then switches to translate the ORF on the tmRNA; the nascent peptide is terminated with the 'tag peptide' encoded by the tmRNA and targeted for degradation. The ribosome is freed to recommence translation, which seems to be the essential function of trans-translation. The sequence is that of SsrA-binding protein from Methylobacterium radiotolerans (strain ATCC 27329 / DSM 1819 / JCM 2831 / NBRC 15690 / NCIMB 10815 / 0-1).